Consider the following 502-residue polypeptide: UPF0371 protein CLJ_B0384 (502 aa).

The protein belongs to the UPF0371 family.

The chain is UPF0371 protein CLJ_B0384 from Clostridium botulinum (strain 657 / Type Ba4).